The chain runs to 239 residues: Transmembrane ascorbate ferrireductase 1 (239 aa).

The Cytoplasmic portion of the chain corresponds to 1-7; that stretch reads MAVRINA. The chain crosses the membrane as a helical span at residues 8–28; it reads MAVTFVAHALAVIAAIMVLVW. One can recognise a Cytochrome b561 domain in the interval 13 to 216; the sequence is VAHALAVIAA…FGAFVVLTAS (204 aa). Residues 29–45 lie on the Lumenal side of the membrane; it reads SISYRGGLAWEATNKNL. Residues 46-66 form a helical membrane-spanning segment; that stretch reads IFNLHPVLMLIGFIILGGEAI. A heme b-binding site is contributed by histidine 50. Residues 67–81 are Cytoplasmic-facing; sequence ISYKSLPLEKPVKKL. A helical membrane pass occupies residues 82 to 102; it reads IHLILHAIALALGIFGICAAF. Positions 83 and 117 each coordinate heme b. The Lumenal segment spans residues 103 to 119; it reads KNHNESHIPNLYSLHSW. A helical membrane pass occupies residues 120–140; it reads IGIGVISLYGFQWVYSFIVFF. At 141–155 the chain is on the cytoplasmic side; that stretch reads FPGGSTNLKSGLLPW. Histidine 156 contacts heme b. The helical transmembrane segment at 156 to 176 threads the bilayer; that stretch reads HAMLGLFVYILAVGNAALGFL. Over 177 to 193 the chain is Lumenal; it reads EKLTFLENGGLDKYGSE. Residues 194–214 traverse the membrane as a helical segment; sequence AFLINFTAIITILFGAFVVLT. Topologically, residues 215–239 are cytoplasmic; the sequence is ASAESPSPSPSVSNDDSVDFSYSAI. Residues 217-239 are disordered; that stretch reads AESPSPSPSVSNDDSVDFSYSAI. Residues 224–239 are compositionally biased toward low complexity; sequence PSVSNDDSVDFSYSAI.

In terms of assembly, homodimer. The cofactor is heme b. As to expression, expressed in roots, seedlings and leaves. Lower expression in flowers. Expressed in the L1 layer of the shoot apex, in the epidermis of leaf primordia and young leaves and in vascular bundles. In the differentiation zone of the root, detected in the pericycle and in the epidermis, but not in the cortex. Strongly expressed in the lateral part of the root cap and in the epidermis of the root tip, but not in the meristematic tissue. Not expressed in lateral roots. In mature embryos, expressed in the epidermis, cotyledon tips and root tips.

It localises to the vacuole membrane. It carries out the reaction Fe(3+)(out) + L-ascorbate(in) = monodehydro-L-ascorbate radical(in) + Fe(2+)(out) + H(+). Its function is as follows. Two-heme-containing cytochrome. Catalyzes ascorbate-dependent trans-membrane ferric-chelate reduction. Able to use dihydrolipoic acid (DHLA) as an alternative substrate to ascorbate. This Arabidopsis thaliana (Mouse-ear cress) protein is Transmembrane ascorbate ferrireductase 1 (CYB561A).